We begin with the raw amino-acid sequence, 158 residues long: NAD(P)H-quinone oxidoreductase subunit N (158 aa).

It belongs to the complex I NdhN subunit family. NDH-1 can be composed of about 15 different subunits; different subcomplexes with different compositions have been identified which probably have different functions.

It localises to the cellular thylakoid membrane. The catalysed reaction is a plastoquinone + NADH + (n+1) H(+)(in) = a plastoquinol + NAD(+) + n H(+)(out). It catalyses the reaction a plastoquinone + NADPH + (n+1) H(+)(in) = a plastoquinol + NADP(+) + n H(+)(out). In terms of biological role, NDH-1 shuttles electrons from an unknown electron donor, via FMN and iron-sulfur (Fe-S) centers, to quinones in the respiratory and/or the photosynthetic chain. The immediate electron acceptor for the enzyme in this species is believed to be plastoquinone. Couples the redox reaction to proton translocation, and thus conserves the redox energy in a proton gradient. Cyanobacterial NDH-1 also plays a role in inorganic carbon-concentration. The protein is NAD(P)H-quinone oxidoreductase subunit N of Prochlorococcus marinus (strain MIT 9301).